The primary structure comprises 679 residues: UvrABC system protein B (679 aa).

The region spanning 25 to 190 (EGVNQGQRYQ…SRNDFDITRG (166 aa)) is the Helicase ATP-binding domain. 38 to 45 (GATGTGKT) is a binding site for ATP. The Beta-hairpin signature appears at 91–114 (YYDYYQPEAYVPVSDTYIAKTASI). One can recognise a Helicase C-terminal domain in the interval 429–591 (QVDDLLAEIR…IVPRPAGKRA (163 aa)). In terms of domain architecture, UVR spans 639-674 (PELIDQLETKMKEAAKNLNFEEAASLRDRIKKFRQK).

It belongs to the UvrB family. Forms a heterotetramer with UvrA during the search for lesions. Interacts with UvrC in an incision complex.

It localises to the cytoplasm. The UvrABC repair system catalyzes the recognition and processing of DNA lesions. A damage recognition complex composed of 2 UvrA and 2 UvrB subunits scans DNA for abnormalities. Upon binding of the UvrA(2)B(2) complex to a putative damaged site, the DNA wraps around one UvrB monomer. DNA wrap is dependent on ATP binding by UvrB and probably causes local melting of the DNA helix, facilitating insertion of UvrB beta-hairpin between the DNA strands. Then UvrB probes one DNA strand for the presence of a lesion. If a lesion is found the UvrA subunits dissociate and the UvrB-DNA preincision complex is formed. This complex is subsequently bound by UvrC and the second UvrB is released. If no lesion is found, the DNA wraps around the other UvrB subunit that will check the other stand for damage. The chain is UvrABC system protein B from Prochlorococcus marinus (strain MIT 9303).